Here is a 155-residue protein sequence, read N- to C-terminus: DNA gyrase inhibitor (155 aa).

Belongs to the DNA gyrase inhibitor family. Interacts with DNA gyrase.

The protein localises to the cytoplasm. In terms of biological role, inhibits the supercoiling activity of DNA gyrase. Acts by inhibiting DNA gyrase at an early step, prior to (or at the step of) binding of DNA by the gyrase. It protects cells against toxins that target DNA gyrase, by inhibiting activity of these toxins and reducing the formation of lethal double-strand breaks in the cell. The protein is DNA gyrase inhibitor of Escherichia fergusonii (strain ATCC 35469 / DSM 13698 / CCUG 18766 / IAM 14443 / JCM 21226 / LMG 7866 / NBRC 102419 / NCTC 12128 / CDC 0568-73).